Here is a 235-residue protein sequence, read N- to C-terminus: UPF0173 metal-dependent hydrolase Oant_3663 (235 aa).

Belongs to the UPF0173 family.

The sequence is that of UPF0173 metal-dependent hydrolase Oant_3663 from Brucella anthropi (strain ATCC 49188 / DSM 6882 / CCUG 24695 / JCM 21032 / LMG 3331 / NBRC 15819 / NCTC 12168 / Alc 37) (Ochrobactrum anthropi).